The following is a 256-amino-acid chain: Trypsin alpha (256 aa).

An N-terminal signal peptide occupies residues 1 to 22 (MLKIVILLSAVVCALGGTVPEG). Positions 23–30 (LLPQLDGR) are cleaved as a propeptide — activation peptide. One can recognise a Peptidase S1 domain in the interval 31–254 (IVGGSATTIS…LRSWVVSTAN (224 aa)). Residues cysteine 56 and cysteine 72 are joined by a disulfide bond. Active-site charge relay system residues include histidine 71 and aspartate 116. Cystine bridges form between cysteine 180–cysteine 197 and cysteine 206–cysteine 230. The active-site Charge relay system is serine 210.

This sequence belongs to the peptidase S1 family. In terms of tissue distribution, synthesized in the midgut of both larvae and adults, primarily in the ventriculus and gastric caeca.

It localises to the secreted. Its subcellular location is the extracellular space. It carries out the reaction Preferential cleavage: Arg-|-Xaa, Lys-|-Xaa.. The chain is Trypsin alpha (alphaTry) from Drosophila melanogaster (Fruit fly).